We begin with the raw amino-acid sequence, 337 residues long: MASIHRPKRGSLAFSPRKRAKSHIPRFRAWPEATGEPKLQSFAGYKVGMTHVIMVDDIKNSLTQGMEISVPVTVIETPAIRVAAVRAYTEDSTGEKAIAEAWAADLDSELKRRIPIPAAGNQAEGLENIGKLIEEGRVSDIRAVTYTLPKSLTGVPKKVPDIMESGISAKDLGAKFEYAKSILGNLVNVTDVFKNGTVVDTAAITIGKGTQGPVKRWGIQLQKGKHSRQGSLRQIGTLGSFNPSRVSWRVPQMGQMGYHQRTEFNKRILKIGSDGEEVTPEGGFINYGLVRGDYVLIKGSVPGPSKRLIRLRDPIRAKKADLGEPNILYISRESKQG.

The disordered stretch occupies residues 1-20 (MASIHRPKRGSLAFSPRKRA).

The protein belongs to the universal ribosomal protein uL3 family. Part of the 50S ribosomal subunit. Forms a cluster with proteins L14 and L24e.

In terms of biological role, one of the primary rRNA binding proteins, it binds directly near the 3'-end of the 23S rRNA, where it nucleates assembly of the 50S subunit. This Methanosarcina mazei (strain ATCC BAA-159 / DSM 3647 / Goe1 / Go1 / JCM 11833 / OCM 88) (Methanosarcina frisia) protein is Large ribosomal subunit protein uL3.